The primary structure comprises 182 residues: UPF0397 protein VV2_1534 (182 aa).

Transmembrane regions (helical) follow at residues 8–28 (VVVI…MFGI), 41–61 (AVLA…VGFI), 72–92 (WGVW…IGLF), 110–130 (FSLF…CSAF), and 146–166 (QLTI…YFIL).

It belongs to the UPF0397 family.

It localises to the cell membrane. The chain is UPF0397 protein VV2_1534 from Vibrio vulnificus (strain CMCP6).